A 553-amino-acid chain; its full sequence is Cytochrome P450 86A2 (553 aa).

A helical transmembrane segment spans residues 2–20; sequence DVSNTMLLVAVVAAYWLWF. Cys459 provides a ligand contact to heme.

Belongs to the cytochrome P450 family. Heme is required as a cofactor. As to expression, expressed in leaves, stems, flowers and siliques. Expressed at low levels in roots. Expressed in guard cells of cotyledons and leaves.

The protein resides in the membrane. It catalyses the reaction an organic molecule + reduced [NADPH--hemoprotein reductase] + O2 = an alcohol + oxidized [NADPH--hemoprotein reductase] + H2O + H(+). Its function is as follows. Catalyzes the omega-hydroxylation of various fatty acids (FA). Acts on saturated and unsaturated fatty acids with chain lengths from C12 to C18. Plays a major role in the biosynthesis of extracellular lipids. Involved in the biosynthesis of hydroxylated fatty acids required for cutin biosynthesis, cuticle development and repression of bacterial type III gene expression. The protein is Cytochrome P450 86A2 (CYP86A2) of Arabidopsis thaliana (Mouse-ear cress).